Here is a 232-residue protein sequence, read N- to C-terminus: Sugar fermentation stimulation protein homolog (232 aa).

It belongs to the SfsA family.

The protein is Sugar fermentation stimulation protein homolog of Shouchella clausii (strain KSM-K16) (Alkalihalobacillus clausii).